The following is a 134-amino-acid chain: Putative nickel-responsive regulator (134 aa).

H78, H89, H91, and C97 together coordinate Ni(2+).

It belongs to the transcriptional regulatory CopG/NikR family. The cofactor is Ni(2+).

Its function is as follows. Transcriptional regulator. The polypeptide is Putative nickel-responsive regulator (Chlorobaculum tepidum (strain ATCC 49652 / DSM 12025 / NBRC 103806 / TLS) (Chlorobium tepidum)).